The chain runs to 423 residues: Histidine--tRNA ligase (423 aa).

It belongs to the class-II aminoacyl-tRNA synthetase family. As to quaternary structure, homodimer.

It localises to the cytoplasm. It carries out the reaction tRNA(His) + L-histidine + ATP = L-histidyl-tRNA(His) + AMP + diphosphate + H(+). This is Histidine--tRNA ligase from Rhodococcus jostii (strain RHA1).